Here is a 137-residue protein sequence, read N- to C-terminus: Large ribosomal subunit protein eL28 (137 aa).

S2 carries the post-translational modification N-acetylserine. Glycyl lysine isopeptide (Lys-Gly) (interchain with G-Cter in SUMO2) cross-links involve residues K58 and K65. A Phosphoserine modification is found at S115.

It belongs to the eukaryotic ribosomal protein eL28 family. In terms of assembly, component of the large ribosomal subunit.

The protein localises to the cytoplasm. In terms of biological role, component of the large ribosomal subunit. The ribosome is a large ribonucleoprotein complex responsible for the synthesis of proteins in the cell. The chain is Large ribosomal subunit protein eL28 (Rpl28) from Rattus norvegicus (Rat).